Reading from the N-terminus, the 309-residue chain is MKITILSGGTGTPKLIQGFKEILPNEDISVIVNTGEDTYIGDIYLSPDIDTVLYTFSDLINDETWYGLKGDTFICHEQLKKFGSDEVLKIGDKDRALKMHKASSLKKGVLMSEIVDIERNSLSIKSKIYPMSNEKVESKVLIEENNEKILLKFHDFWIFRKGNAKVLDIFYENSNYAKAADGVLKAIEESDFVLIGPSNPITSIGPILSISEIKNALKEKLVFAVSPIVGENPVSGPAGTLMNAKGYPVNAIGVYEYYKDIVDVLVLDNSDINKKKDINCEVLYANTIMKTIDDKINLARNILDYYKSR.

Residues Asp50 and Lys89 each contribute to the 7,8-didemethyl-8-hydroxy-5-deazariboflavin site.

Belongs to the CofD family. Homodimer. It depends on Mg(2+) as a cofactor.

It catalyses the reaction (2S)-lactyl-2-diphospho-5'-guanosine + 7,8-didemethyl-8-hydroxy-5-deazariboflavin = oxidized coenzyme F420-0 + GMP + H(+). It participates in cofactor biosynthesis; coenzyme F420 biosynthesis. Catalyzes the transfer of the 2-phospholactate moiety from (2S)-lactyl-2-diphospho-5'-guanosine to 7,8-didemethyl-8-hydroxy-5-deazariboflavin (FO) with the formation of oxidized coenzyme F420-0 and GMP. This is 2-phospho-L-lactate transferase from Methanococcus maripaludis (strain C6 / ATCC BAA-1332).